Here is a 372-residue protein sequence, read N- to C-terminus: Biotin synthase (372 aa).

One can recognise a Radical SAM core domain in the interval 73–308 (CCGNTVDLCS…QQIIRYAGGR (236 aa)). 3 residues coordinate [4Fe-4S] cluster: Cys-91, Cys-95, and Cys-98. [2Fe-2S] cluster contacts are provided by Cys-136, Cys-173, Cys-233, and Arg-303.

This sequence belongs to the radical SAM superfamily. Biotin synthase family. Homodimer. [4Fe-4S] cluster serves as cofactor. Requires [2Fe-2S] cluster as cofactor.

It carries out the reaction (4R,5S)-dethiobiotin + (sulfur carrier)-SH + 2 reduced [2Fe-2S]-[ferredoxin] + 2 S-adenosyl-L-methionine = (sulfur carrier)-H + biotin + 2 5'-deoxyadenosine + 2 L-methionine + 2 oxidized [2Fe-2S]-[ferredoxin]. The protein operates within cofactor biosynthesis; biotin biosynthesis; biotin from 7,8-diaminononanoate: step 2/2. In terms of biological role, catalyzes the conversion of dethiobiotin (DTB) to biotin by the insertion of a sulfur atom into dethiobiotin via a radical-based mechanism. This is Biotin synthase from Cyanothece sp. (strain PCC 7425 / ATCC 29141).